A 314-amino-acid chain; its full sequence is Ribosomal protein L11 methyltransferase (314 aa).

Residues threonine 163, glycine 184, aspartate 206, and asparagine 248 each contribute to the S-adenosyl-L-methionine site.

It belongs to the methyltransferase superfamily. PrmA family.

It is found in the cytoplasm. It catalyses the reaction L-lysyl-[protein] + 3 S-adenosyl-L-methionine = N(6),N(6),N(6)-trimethyl-L-lysyl-[protein] + 3 S-adenosyl-L-homocysteine + 3 H(+). In terms of biological role, methylates ribosomal protein L11. The polypeptide is Ribosomal protein L11 methyltransferase (Lactobacillus delbrueckii subsp. bulgaricus (strain ATCC BAA-365 / Lb-18)).